The following is a 316-amino-acid chain: Retinol dehydrogenase 12 (316 aa).

Residue 46-52 coordinates NADP(+); that stretch reads GANTGIG. S175 is a binding site for substrate. Residue Y200 is the Proton acceptor of the active site.

This sequence belongs to the short-chain dehydrogenases/reductases (SDR) family. In terms of tissue distribution, expressed in the inner segments of the photoreceptor in retina.

It carries out the reaction all-trans-retinol + NADP(+) = all-trans-retinal + NADPH + H(+). It catalyses the reaction 11-cis-retinol + NADP(+) = 11-cis-retinal + NADPH + H(+). The catalysed reaction is 9-cis-retinol + NADP(+) = 9-cis-retinal + NADPH + H(+). The enzyme catalyses a 4-hydroxynonen-1-ol + NADP(+) = a 4-hydroxynonenal + NADPH + H(+). It carries out the reaction (E)-non-2-en-1-ol + NADP(+) = (E)-non-2-enal + NADPH + H(+). It catalyses the reaction (Z)-non-6-en-1-ol + NADP(+) = (Z)-non-6-enal + NADPH + H(+). The catalysed reaction is nonan-1-ol + NADP(+) = nonanal + NADPH + H(+). It participates in cofactor metabolism; retinol metabolism. Retinoids dehydrogenase/reductase with a clear preference for NADP. Displays high activity towards 9-cis, 11-cis and all-trans-retinal. Shows very weak activity toward 13-cis-retinol. Also exhibits activity, albeit with lower affinity than for retinaldehydes, towards lipid peroxidation products (C9 aldehydes) such as 4-hydroxynonenal and trans-2-nonenal. Plays an important function in photoreceptor cells to detoxify 4-hydroxynonenal and potentially other toxic aldehyde products resulting from lipid peroxidation. Has no dehydrogenase activity towards steroids. The chain is Retinol dehydrogenase 12 (Rdh12) from Mus musculus (Mouse).